A 276-amino-acid chain; its full sequence is Tryptophan synthase alpha chain (276 aa).

Active-site proton acceptor residues include glutamate 55 and aspartate 66.

Belongs to the TrpA family. Tetramer of two alpha and two beta chains.

It catalyses the reaction (1S,2R)-1-C-(indol-3-yl)glycerol 3-phosphate + L-serine = D-glyceraldehyde 3-phosphate + L-tryptophan + H2O. It participates in amino-acid biosynthesis; L-tryptophan biosynthesis; L-tryptophan from chorismate: step 5/5. Functionally, the alpha subunit is responsible for the aldol cleavage of indoleglycerol phosphate to indole and glyceraldehyde 3-phosphate. In Gloeobacter violaceus (strain ATCC 29082 / PCC 7421), this protein is Tryptophan synthase alpha chain.